The following is a 402-amino-acid chain: Putative RNA-guided DNA endonuclease InsQ (402 aa).

Residues Asp183 and Glu267 contribute to the active site. Residues Cys334, Cys337, Cys353, and Cys356 each coordinate Zn(2+). Residue Asp363 is part of the active site.

It in the N-terminal section; belongs to the transposase 2 family. In the C-terminal section; belongs to the transposase 35 family.

In terms of biological role, an RNA-guided dsDNA endonuclease. When guided by an RNA derived from the right-end element of its insertion sequence element (IS), cleaves DNA downstream of the transposon-associated motif (TAM). Cleaves supercoiled and linear DNA in a staggered manner 15-21 bases from the TAM yielding 5'-overhangs. Binds reRNA, an approximately 150 nucleotide base sRNA derived from the 3' end of its own gene, the right end (RE) of the insertion sequence (IS) plus sequence downstream of the IS. Not required for transposition of the insertion element. The corresponding transposase in strains MG1655 and W3110 is a truncated pseudogene (yncK). This chain is Putative RNA-guided DNA endonuclease InsQ (insQ), found in Escherichia coli (strain K12).